We begin with the raw amino-acid sequence, 338 residues long: Heat-inducible transcription repressor HrcA (338 aa).

Belongs to the HrcA family.

Negative regulator of class I heat shock genes (grpE-dnaK-dnaJ and groELS operons). Prevents heat-shock induction of these operons. This chain is Heat-inducible transcription repressor HrcA, found in Thermotoga sp. (strain RQ2).